A 1203-amino-acid chain; its full sequence is ATP-dependent helicase/nuclease subunit A (1203 aa).

The region spanning 4–472 is the UvrD-like helicase ATP-binding domain; sequence VKLTPEQNEA…IRLKENFRSR (469 aa). 25–32 provides a ligand contact to ATP; that stretch reads ASAGSGKT. The UvrD-like helicase C-terminal domain maps to 503-785; it reads VQGNITDYPV…RVMTFHKSKG (283 aa).

It belongs to the helicase family. AddA subfamily. In terms of assembly, heterodimer of AddA and AddB/RexB. It depends on Mg(2+) as a cofactor.

The catalysed reaction is Couples ATP hydrolysis with the unwinding of duplex DNA by translocating in the 3'-5' direction.. It carries out the reaction ATP + H2O = ADP + phosphate + H(+). The heterodimer acts as both an ATP-dependent DNA helicase and an ATP-dependent, dual-direction single-stranded exonuclease. Recognizes the chi site generating a DNA molecule suitable for the initiation of homologous recombination. The AddA nuclease domain is required for chi fragment generation; this subunit has the helicase and 3' -&gt; 5' nuclease activities. This chain is ATP-dependent helicase/nuclease subunit A, found in Lactococcus lactis subsp. lactis (strain IL1403) (Streptococcus lactis).